The chain runs to 323 residues: tRNA dimethylallyltransferase (323 aa).

12-19 (GPTAAGKT) is an ATP binding site. Substrate is bound at residue 14-19 (TAAGKT). Interaction with substrate tRNA regions lie at residues 37-40 (DSAL) and 161-165 (QRLMR).

It belongs to the IPP transferase family. In terms of assembly, monomer. Mg(2+) is required as a cofactor.

The catalysed reaction is adenosine(37) in tRNA + dimethylallyl diphosphate = N(6)-dimethylallyladenosine(37) in tRNA + diphosphate. Catalyzes the transfer of a dimethylallyl group onto the adenine at position 37 in tRNAs that read codons beginning with uridine, leading to the formation of N6-(dimethylallyl)adenosine (i(6)A). In Pseudomonas aeruginosa (strain UCBPP-PA14), this protein is tRNA dimethylallyltransferase.